Here is a 306-residue protein sequence, read N- to C-terminus: Ribosomal protein L11 methyltransferase (306 aa).

S-adenosyl-L-methionine-binding residues include Thr154, Gly179, Asp201, and Asn242.

This sequence belongs to the methyltransferase superfamily. PrmA family.

Its subcellular location is the cytoplasm. The enzyme catalyses L-lysyl-[protein] + 3 S-adenosyl-L-methionine = N(6),N(6),N(6)-trimethyl-L-lysyl-[protein] + 3 S-adenosyl-L-homocysteine + 3 H(+). Functionally, methylates ribosomal protein L11. The chain is Ribosomal protein L11 methyltransferase from Stenotrophomonas maltophilia (strain K279a).